Reading from the N-terminus, the 249-residue chain is ATP synthase subunit a (249 aa).

6 helical membrane-spanning segments follow: residues 26 to 46 (FTNSSLFMVATVAAAGAFLYL), 84 to 104 (FFPFVFSLFMFVLVANLLGLF), 114 to 134 (IVVTFALALLVIGTVLVYGFW), 143 to 163 (LFVPEGVPGVLLPLVVLIEVI), 185 to 205 (ITLKVFAGFVTSLGALGVAGA), and 208 to 228 (AVLPLAMTVALTGLELLVAFL).

It belongs to the ATPase A chain family. F-type ATPases have 2 components, CF(1) - the catalytic core - and CF(0) - the membrane proton channel. CF(1) has five subunits: alpha(3), beta(3), gamma(1), delta(1), epsilon(1). CF(0) has three main subunits: a(1), b(2) and c(9-12). The alpha and beta chains form an alternating ring which encloses part of the gamma chain. CF(1) is attached to CF(0) by a central stalk formed by the gamma and epsilon chains, while a peripheral stalk is formed by the delta and b chains.

The protein resides in the cell inner membrane. Its function is as follows. Key component of the proton channel; it plays a direct role in the translocation of protons across the membrane. This Chelativorans sp. (strain BNC1) protein is ATP synthase subunit a.